The primary structure comprises 92 residues: Cell division topological specificity factor (92 aa).

It belongs to the MinE family.

Functionally, prevents the cell division inhibition by proteins MinC and MinD at internal division sites while permitting inhibition at polar sites. This ensures cell division at the proper site by restricting the formation of a division septum at the midpoint of the long axis of the cell. In Gluconobacter oxydans (strain 621H) (Gluconobacter suboxydans), this protein is Cell division topological specificity factor.